Reading from the N-terminus, the 204-residue chain is Putative uracil phosphoribosyltransferase urg2 (204 aa).

Residues R75, R100, and 126 to 134 contribute to the 5-phospho-alpha-D-ribose 1-diphosphate site; that span reads DPVMATGGT. Position 187 (Y187) interacts with D-ribose 5-phosphate. Uracil is bound by residues L188 and 193 to 195; that span reads GDI. Residue D194 coordinates 5-phospho-alpha-D-ribose 1-diphosphate.

This sequence belongs to the UPRTase family. Mg(2+) serves as cofactor.

Its subcellular location is the cytoplasm. The protein resides in the nucleus. It carries out the reaction UMP + diphosphate = 5-phospho-alpha-D-ribose 1-diphosphate + uracil. It participates in pyrimidine metabolism; UMP biosynthesis via salvage pathway; UMP from uracil: step 1/1. With respect to regulation, allosterically activated by GTP. Catalyzes the conversion of uracil and 5-phospho-alpha-D-ribose 1-diphosphate (PRPP) to UMP and diphosphate. This is Putative uracil phosphoribosyltransferase urg2 from Schizosaccharomyces pombe (strain 972 / ATCC 24843) (Fission yeast).